The sequence spans 145 residues: Alpha-amylase/trypsin inhibitor CMa (145 aa).

The N-terminal stretch at 1 to 25 (MASKSSITPLLLAAVLASVFAAATA) is a signal peptide.

It belongs to the protease inhibitor I6 (cereal trypsin/alpha-amylase inhibitor) family. As to quaternary structure, heterotetramer of one CMa, one CMb and two CMd chains. In terms of processing, five disulfide bonds, which are essential for the inhibitor activity, are probably present. As to expression, endosperm.

It is found in the secreted. Alpha-amylase/trypsin inhibitor. It could be involved in insect defense mechanisms. This Hordeum vulgare (Barley) protein is Alpha-amylase/trypsin inhibitor CMa (IAT1).